A 436-amino-acid chain; its full sequence is Ribosomal protein uS12 methylthiotransferase RimO (436 aa).

Residues 2–117 enclose the MTTase N-terminal domain; sequence RNVGIISLGC…IVDVIEEVKK (116 aa). Residues C11, C47, C80, C154, C158, and C161 each coordinate [4Fe-4S] cluster. The 230-residue stretch at 140–369 folds into the Radical SAM core domain; sequence TTPPYYAYLK…MEIQKQISYE (230 aa). In terms of domain architecture, TRAM spans 372-436; that stretch reads MSKIGTKLEV…AFEYDLVGEY (65 aa).

Belongs to the methylthiotransferase family. RimO subfamily. [4Fe-4S] cluster is required as a cofactor.

The protein resides in the cytoplasm. It catalyses the reaction L-aspartate(89)-[ribosomal protein uS12]-hydrogen + (sulfur carrier)-SH + AH2 + 2 S-adenosyl-L-methionine = 3-methylsulfanyl-L-aspartate(89)-[ribosomal protein uS12]-hydrogen + (sulfur carrier)-H + 5'-deoxyadenosine + L-methionine + A + S-adenosyl-L-homocysteine + 2 H(+). Catalyzes the methylthiolation of an aspartic acid residue of ribosomal protein uS12. The polypeptide is Ribosomal protein uS12 methylthiotransferase RimO (Caldanaerobacter subterraneus subsp. tengcongensis (strain DSM 15242 / JCM 11007 / NBRC 100824 / MB4) (Thermoanaerobacter tengcongensis)).